Consider the following 270-residue polypeptide: Fructose-2,6-bisphosphatase TIGAR (270 aa).

H11 acts as the Tele-phosphohistidine intermediate in catalysis. An N6-acetyllysine modification is found at K50. E89 (proton donor/acceptor) is an active-site residue.

The protein belongs to the phosphoglycerate mutase family. Interacts with HK2; the interaction increases hexokinase HK2 activity in a hypoxia- and HIF1A-dependent manner, resulting in the regulation of mitochondrial membrane potential, thus increasing NADPH production and decreasing intracellular ROS levels.

It localises to the cytoplasm. It is found in the nucleus. The protein localises to the mitochondrion. It catalyses the reaction beta-D-fructose 2,6-bisphosphate + H2O = beta-D-fructose 6-phosphate + phosphate. Its function is as follows. Fructose-bisphosphatase hydrolyzing fructose-2,6-bisphosphate as well as fructose-1,6-bisphosphate. Acts as a negative regulator of glycolysis by lowering intracellular levels of fructose-2,6-bisphosphate in a p53/TP53-dependent manner, resulting in the pentose phosphate pathway (PPP) activation and NADPH production. Contributes to the generation of reduced glutathione to cause a decrease in intracellular reactive oxygen species (ROS) content, correlating with its ability to protect cells from oxidative or metabolic stress-induced cell death. Plays a role in promoting protection against cell death during hypoxia by decreasing mitochondria ROS levels in a HK2-dependent manner through a mechanism that is independent of its fructose-bisphosphatase activity. In response to cardiac damage stress, mediates p53-induced inhibition of myocyte mitophagy through ROS levels reduction and the subsequent inactivation of BNIP3. Reduced mitophagy results in an enhanced apoptotic myocyte cell death, and exacerbates cardiac damage. Plays a role in adult intestinal regeneration; contributes to the growth, proliferation and survival of intestinal crypts following tissue ablation. Plays a neuroprotective role against ischemic brain damage by enhancing PPP flux and preserving mitochondria functions. Protects glioma cells from hypoxia- and ROS-induced cell death by inhibiting glycolysis and activating mitochondrial energy metabolism and oxygen consumption in a TKTL1-dependent and p53/TP53-independent manner. Plays a role in cancer cell survival by promoting DNA repair through activating PPP flux in a CDK5-ATM-dependent signaling pathway during hypoxia and/or genome stress-induced DNA damage responses. Involved in intestinal tumor progression. This is Fructose-2,6-bisphosphatase TIGAR from Bos taurus (Bovine).